We begin with the raw amino-acid sequence, 403 residues long: Phosphopentomutase (403 aa).

Mn(2+) contacts are provided by aspartate 13, aspartate 298, histidine 303, aspartate 339, histidine 340, and histidine 351.

It belongs to the phosphopentomutase family. Mn(2+) is required as a cofactor.

Its subcellular location is the cytoplasm. It carries out the reaction 2-deoxy-alpha-D-ribose 1-phosphate = 2-deoxy-D-ribose 5-phosphate. It catalyses the reaction alpha-D-ribose 1-phosphate = D-ribose 5-phosphate. It functions in the pathway carbohydrate degradation; 2-deoxy-D-ribose 1-phosphate degradation; D-glyceraldehyde 3-phosphate and acetaldehyde from 2-deoxy-alpha-D-ribose 1-phosphate: step 1/2. Its function is as follows. Isomerase that catalyzes the conversion of deoxy-ribose 1-phosphate (dRib-1-P) and ribose 1-phosphate (Rib-1-P) to deoxy-ribose 5-phosphate (dRib-5-P) and ribose 5-phosphate (Rib-5-P), respectively. The protein is Phosphopentomutase of Streptococcus suis (strain 05ZYH33).